Consider the following 694-residue polypeptide: Elongation factor G (694 aa).

Positions 8 to 287 (EDYRNFGIMA…AVVEFLPAPT (280 aa)) constitute a tr-type G domain. GTP contacts are provided by residues 17-24 (AHIDAGKT), 86-90 (DTPGH), and 140-143 (NKMD).

The protein belongs to the TRAFAC class translation factor GTPase superfamily. Classic translation factor GTPase family. EF-G/EF-2 subfamily.

The protein resides in the cytoplasm. Functionally, catalyzes the GTP-dependent ribosomal translocation step during translation elongation. During this step, the ribosome changes from the pre-translocational (PRE) to the post-translocational (POST) state as the newly formed A-site-bound peptidyl-tRNA and P-site-bound deacylated tRNA move to the P and E sites, respectively. Catalyzes the coordinated movement of the two tRNA molecules, the mRNA and conformational changes in the ribosome. The protein is Elongation factor G of Brucella suis (strain ATCC 23445 / NCTC 10510).